The primary structure comprises 473 residues: Uronate isomerase (473 aa).

Belongs to the metallo-dependent hydrolases superfamily. Uronate isomerase family.

It catalyses the reaction D-glucuronate = D-fructuronate. The enzyme catalyses aldehydo-D-galacturonate = keto-D-tagaturonate. It participates in carbohydrate metabolism; pentose and glucuronate interconversion. The protein is Uronate isomerase (uxaC) of Geobacillus stearothermophilus (Bacillus stearothermophilus).